The chain runs to 491 residues: bZIP transcription factor hapX (491 aa).

Residues 19–73 form a disordered region; sequence AKPAISPSPGPGTPGSITSKEWVIPPRPKPGRKPATDTPPTKRKAQNRAAQRAFR. Positions 55-95 constitute a bZIP domain; the sequence is DTPPTKRKAQNRAAQRAFRERRAARVNELEEQIKKIEDEHE. A basic motif region spans residues 60–79; that stretch reads KRKAQNRAAQRAFRERRAAR. Positions 83 to 90 are leucine-zipper; the sequence is LEEQIKKI. A compositionally biased stretch (basic and acidic residues) spans 149 to 161; it reads SSLSDREAVRSDK. Disordered regions lie at residues 149–196, 224–245, and 397–416; these read SSLS…REEV, EQSRRLDTTKPGLSEPQIKPDP, and VSRGRSGSNNNTSSGSSAAP. Positions 397 to 413 are enriched in low complexity; it reads VSRGRSGSNNNTSSGSS.

Belongs to the bZIP family. YAP subfamily.

It is found in the nucleus. Functionally, transcription factor required for repression of genes during iron starvation. Represses iron-dependent and mitochondrial-localized activities including respiration, TCA cycle, amino acid metabolism, iron-sulfur-cluster and heme biosynthesis. Iron starvation causes a massive remodeling of the amino acid pool and hapX is essential for the coordination of the production of siderophores and their precursor ornithine. The polypeptide is bZIP transcription factor hapX (Aspergillus fumigatus (strain ATCC MYA-4609 / CBS 101355 / FGSC A1100 / Af293) (Neosartorya fumigata)).